A 384-amino-acid polypeptide reads, in one-letter code: Queuine tRNA-ribosyltransferase (384 aa).

Residue Asp103 is the Proton acceptor of the active site. Residues 103–107 (DSGGF), Asp157, Gln200, and Gly227 each bind substrate. The tract at residues 258 to 264 (GVGTYRE) is RNA binding. Asp277 acts as the Nucleophile in catalysis. The RNA binding; important for wobble base 34 recognition stretch occupies residues 282 to 286 (TRLAR). The Zn(2+) site is built by Cys315, Cys317, Cys320, and His346.

This sequence belongs to the queuine tRNA-ribosyltransferase family. Homodimer. Within each dimer, one monomer is responsible for RNA recognition and catalysis, while the other monomer binds to the replacement base PreQ1. Zn(2+) serves as cofactor.

It catalyses the reaction 7-aminomethyl-7-carbaguanine + guanosine(34) in tRNA = 7-aminomethyl-7-carbaguanosine(34) in tRNA + guanine. It functions in the pathway tRNA modification; tRNA-queuosine biosynthesis. Functionally, catalyzes the base-exchange of a guanine (G) residue with the queuine precursor 7-aminomethyl-7-deazaguanine (PreQ1) at position 34 (anticodon wobble position) in tRNAs with GU(N) anticodons (tRNA-Asp, -Asn, -His and -Tyr). Catalysis occurs through a double-displacement mechanism. The nucleophile active site attacks the C1' of nucleotide 34 to detach the guanine base from the RNA, forming a covalent enzyme-RNA intermediate. The proton acceptor active site deprotonates the incoming PreQ1, allowing a nucleophilic attack on the C1' of the ribose to form the product. After dissociation, two additional enzymatic reactions on the tRNA convert PreQ1 to queuine (Q), resulting in the hypermodified nucleoside queuosine (7-(((4,5-cis-dihydroxy-2-cyclopenten-1-yl)amino)methyl)-7-deazaguanosine). The chain is Queuine tRNA-ribosyltransferase from Synechococcus elongatus (strain ATCC 33912 / PCC 7942 / FACHB-805) (Anacystis nidulans R2).